The primary structure comprises 378 residues: Nitronate monooxygenase (378 aa).

Positions 1–15 (MHFPGHSSKKEESAQ) are excised as a propeptide. 37–39 (PMY) contributes to the FMN binding site. Catalysis depends on His196, which acts as the Proton acceptor. A substrate-binding site is contributed by His196. FMN contacts are provided by residues 229–231 (AGG) and 252–253 (GT).

It belongs to the nitronate monooxygenase family. NMO class II subfamily. In terms of assembly, homodimer. The cofactor is FMN.

It catalyses the reaction ethylnitronate + O2 = chemical entity + acetaldehyde + nitrite + H(+). Catalyzes the oxidation of alkyl nitronates to produce the corresponding carbonyl compounds and nitrites. Anionic forms of nitroalkanes are much better substrates than are neutral forms. The polypeptide is Nitronate monooxygenase (ncd-2) (Neurospora crassa (strain ATCC 24698 / 74-OR23-1A / CBS 708.71 / DSM 1257 / FGSC 987)).